A 342-amino-acid chain; its full sequence is N-acetyl-gamma-glutamyl-phosphate reductase (342 aa).

C149 is a catalytic residue.

Belongs to the NAGSA dehydrogenase family. Type 1 subfamily.

The protein localises to the cytoplasm. The enzyme catalyses N-acetyl-L-glutamate 5-semialdehyde + phosphate + NADP(+) = N-acetyl-L-glutamyl 5-phosphate + NADPH + H(+). Its pathway is amino-acid biosynthesis; L-arginine biosynthesis; N(2)-acetyl-L-ornithine from L-glutamate: step 3/4. Functionally, catalyzes the NADPH-dependent reduction of N-acetyl-5-glutamyl phosphate to yield N-acetyl-L-glutamate 5-semialdehyde. In Cereibacter sphaeroides (strain ATCC 17025 / ATH 2.4.3) (Rhodobacter sphaeroides), this protein is N-acetyl-gamma-glutamyl-phosphate reductase.